Reading from the N-terminus, the 738-residue chain is Eukaryotic translation initiation factor 3 subunit B (738 aa).

The interval 1–120 (MCGCVGVISN…LFIQFKTAQM (120 aa)) is sufficient for interaction with HCR1 and TIF32. The tract at residues 1-245 (MCGCVGVISN…GIQSWGGAQF (245 aa)) is sufficient for interaction with PIC8. The region spanning 59-146 (NFVVVDGAPI…HRLLVNKLSD (88 aa)) is the RRM domain. WD repeat units lie at residues 211 to 250 (PRKGFTSKYAKFSPKGTYLFSIHPQGIQSWGGAQFESISK), 322 to 360 (QKEMPWPLVKWSHDDKYCARQGPGALAIYETPSFQLLDK), 363 to 406 (VKID…QTAR), and 537 to 579 (VVDK…ENVR).

It belongs to the eIF-3 subunit B family. In terms of assembly, component of the eukaryotic translation initiation factor 3 (eIF-3) complex.

The protein localises to the cytoplasm. In terms of biological role, RNA-binding component of the eukaryotic translation initiation factor 3 (eIF-3) complex, which is involved in protein synthesis of a specialized repertoire of mRNAs and, together with other initiation factors, stimulates binding of mRNA and methionyl-tRNAi to the 40S ribosome. The eIF-3 complex specifically targets and initiates translation of a subset of mRNAs involved in cell proliferation. The protein is Eukaryotic translation initiation factor 3 subunit B of Meyerozyma guilliermondii (strain ATCC 6260 / CBS 566 / DSM 6381 / JCM 1539 / NBRC 10279 / NRRL Y-324) (Yeast).